An 898-amino-acid chain; its full sequence is Zinc finger protein 574 (898 aa).

3 C2H2-type zinc fingers span residues 16–38 (YVCS…QNSH), 76–98 (YQCL…QELH), and 126–148 (YECV…RQTH). Ser164 is modified (phosphoserine). The C2H2-type 4 zinc-finger motif lies at 213-235 (YKCSECSQLFQMPADFLEHQATH). The disordered stretch occupies residues 243 to 305 (AEEPATQQET…PRRSSSGESG (63 aa)). A compositionally biased stretch (basic and acidic residues) spans 273–290 (HSYELRNELRNGEAMGRD). Ser301 is subject to Phosphoserine. 4 C2H2-type zinc fingers span residues 310 to 332 (LFCS…LRSH), 337 to 359 (FKCP…LGDH), 365 to 387 (FLCV…RRAH), and 393 to 414 (HSCP…RRTH). Residues 417-460 (GGVPLPTTPVPPEEPAISFPEPAPAETGELEAPELPVSEESSAE) form a disordered region. 6 consecutive C2H2-type zinc fingers follow at residues 467 to 490 (YRCL…RFVH), 496 to 518 (HKCS…LRTH), 524 to 546 (FPCP…RLTH), 552 to 574 (YRCG…RLVH), 580 to 602 (YRCQ…RYHH), and 608 to 631 (YKCR…LVVH). The segment at 637–660 (HRCPSCGAAFPSSLRLREHRCAAA) adopts a C2H2-type 15; degenerate zinc-finger fold. The segment at 668–690 (FECGTCGKKVGSAARLQAHEAAH) adopts a C2H2-type 16 zinc-finger fold. Residues 691–735 (AAAGPGEVLAKEPPAPRAARATRTPVAPSPTALGGTTSAAPAAPA) are disordered. Positions 707–734 (RAARATRTPVAPSPTALGGTTSAAPAAP) are enriched in low complexity. At Ser719 the chain carries Phosphoserine. Thr726 is modified (phosphothreonine). 4 C2H2-type zinc fingers span residues 740–762 (LECS…RRIH), 768–790 (YPCP…RRLH), 796–818 (FACE…RRIH), and 824–846 (YSCP…RKTH). Arg834 is subject to Asymmetric dimethylarginine.

This sequence belongs to the krueppel C2H2-type zinc-finger protein family.

It is found in the nucleus. Functionally, may be involved in transcriptional regulation. The chain is Zinc finger protein 574 (Znf574) from Rattus norvegicus (Rat).